The primary structure comprises 146 residues: Prolactin-inducible protein homolog (146 aa).

Residues 1–28 (MHLLQLLFRASPATLLLVLCLQLGANKA) form the signal peptide. Residue glutamine 29 is modified to Pyrrolidone carboxylic acid. Disulfide bonds link cysteine 65/cysteine 91 and cysteine 89/cysteine 123. Asparagine 105 is a glycosylation site (N-linked (GlcNAc...) asparagine).

It belongs to the PIP family. As to quaternary structure, monomer. Interacts with AZGP1.

The protein localises to the secreted. The polypeptide is Prolactin-inducible protein homolog (PIP) (Pongo pygmaeus (Bornean orangutan)).